Here is a 247-residue protein sequence, read N- to C-terminus: OCIA domain-containing protein 1 (247 aa).

An OCIA domain is found at 1–112 (MNGRADFREP…KKLENSPLGE (112 aa)). A phosphoserine mark is found at S108 and S116. Positions 116-247 (SGELRRSLPP…VNKYGDTWDE (132 aa)) are disordered. Composition is skewed to polar residues over residues 136 to 146 (SNVSGQSSFGT) and 168 to 177 (ASMNESTPTG). 2 stretches are compositionally biased toward basic and acidic residues: residues 192 to 210 (DSPKRKSVTYEELRNKNRE) and 218 to 240 (HKTDPSVRPMQERGPQKEVKVNK). Phosphoserine is present on residues S193 and S198.

The protein belongs to the OCIAD1 family. Interacts with OCIAD2. Interacts with STAT3.

The protein localises to the endosome. Maintains stem cell potency. Increases STAT3 phosphorylation and controls ERK phosphorylation. May act as a scaffold, increasing STAT3 recruitment onto endosomes. This is OCIA domain-containing protein 1 from Rattus norvegicus (Rat).